Reading from the N-terminus, the 101-residue chain is Signal recognition particle 19 kDa protein (101 aa).

Belongs to the SRP19 family. Part of the signal recognition particle protein translocation system, which is composed of SRP and FtsY. Archaeal SRP consists of a 7S RNA molecule of 300 nucleotides and two protein subunits: SRP54 and SRP19.

The protein localises to the cytoplasm. Functionally, involved in targeting and insertion of nascent membrane proteins into the cytoplasmic membrane. Binds directly to 7S RNA and mediates binding of the 54 kDa subunit of the SRP. This is Signal recognition particle 19 kDa protein from Methanosarcina mazei (strain ATCC BAA-159 / DSM 3647 / Goe1 / Go1 / JCM 11833 / OCM 88) (Methanosarcina frisia).